The sequence spans 306 residues: Glutathione transport system permease protein GsiC (306 aa).

Residues 1-8 (MLNYVIKR) lie on the Cytoplasmic side of the membrane. The chain crosses the membrane as a helical span at residues 9–29 (LLGLIPTLFIVSVLVFLFVHM). Over 30-102 (LPGDPARLIA…SRFMPTLWLT (73 aa)) the chain is Periplasmic. The 198-residue stretch at 95-292 (FMPTLWLTIT…LEFILINLVV (198 aa)) folds into the ABC transmembrane type-1 domain. A helical transmembrane segment spans residues 103–123 (ITSMVWAVIFGMAAGIIAAVW). Residues 124–134 (RNRWPDRLSMT) lie on the Cytoplasmic side of the membrane. Residues 135-155 (IAVSGISFPAFALGMLLIQVF) traverse the membrane as a helical segment. Residues 156 to 168 (SVELGWLPTVGAD) lie on the Periplasmic side of the membrane. The chain crosses the membrane as a helical span at residues 169 to 189 (SWQHYILPSLTLGAAVAAVMA). Residues 190–228 (RFTRASFVDVLSEDYMRTARAKGVSETWVVLKHGLRNAM) are Cytoplasmic-facing. A helical transmembrane segment spans residues 229-249 (IPVVTMMGLQFGFLLGGSIVV). Over 250 to 277 (EKVFNWPGLGRLLVDSVEMRDYPVIQAE) the chain is Periplasmic. Residues 278–298 (ILLFSLEFILINLVVDVLYAA) form a helical membrane-spanning segment. At 299-306 (INPAIRYK) the chain is on the cytoplasmic side.

Belongs to the binding-protein-dependent transport system permease family. As to quaternary structure, the complex is composed of two ATP-binding proteins (GsiA), two transmembrane proteins (GsiC and GsiD) and a solute-binding protein (GsiB).

Its subcellular location is the cell inner membrane. Functionally, part of the ABC transporter complex GsiABCD involved in glutathione import. Probably responsible for the translocation of the substrate across the membrane. This is Glutathione transport system permease protein GsiC from Escherichia coli O1:K1 / APEC.